The following is a 347-amino-acid chain: GMP reductase (347 aa).

108-131 (ADFEKTKQILDLNPALNFVCIDVA) lines the NADP(+) pocket. K(+)-binding residues include G181 and G183. C186 functions as the Thioimidate intermediate in the catalytic mechanism. NADP(+) is bound at residue 216 to 239 (IVSDGGCTTPGDVAKAFGGGADFV).

This sequence belongs to the IMPDH/GMPR family. GuaC type 1 subfamily. In terms of assembly, homotetramer.

The enzyme catalyses IMP + NH4(+) + NADP(+) = GMP + NADPH + 2 H(+). Catalyzes the irreversible NADPH-dependent deamination of GMP to IMP. It functions in the conversion of nucleobase, nucleoside and nucleotide derivatives of G to A nucleotides, and in maintaining the intracellular balance of A and G nucleotides. The sequence is that of GMP reductase from Shigella boydii serotype 4 (strain Sb227).